A 156-amino-acid chain; its full sequence is Ribosome-binding factor A (156 aa).

Residues 125 to 138 (RVREGAKHAGDPDP) show a composition bias toward basic and acidic residues. A disordered region spans residues 125–156 (RVREGAKHAGDPDPYRVGGAEDTDGDTDGDER). The segment covering 145–156 (EDTDGDTDGDER) has biased composition (acidic residues).

The protein belongs to the RbfA family. Monomer. Binds 30S ribosomal subunits, but not 50S ribosomal subunits or 70S ribosomes.

The protein localises to the cytoplasm. Its function is as follows. One of several proteins that assist in the late maturation steps of the functional core of the 30S ribosomal subunit. Associates with free 30S ribosomal subunits (but not with 30S subunits that are part of 70S ribosomes or polysomes). Required for efficient processing of 16S rRNA. May interact with the 5'-terminal helix region of 16S rRNA. The sequence is that of Ribosome-binding factor A from Mycolicibacterium smegmatis (strain ATCC 700084 / mc(2)155) (Mycobacterium smegmatis).